Reading from the N-terminus, the 95-residue chain is Ribonuclease P protein component 1 (95 aa).

Belongs to the eukaryotic/archaeal RNase P protein component 1 family. As to quaternary structure, consists of a catalytic RNA component and at least 4 protein subunits. Forms a subcomplex with Rnp4 which stimulates the catalytic RNA.

The protein localises to the cytoplasm. The catalysed reaction is Endonucleolytic cleavage of RNA, removing 5'-extranucleotides from tRNA precursor.. Part of ribonuclease P, a protein complex that generates mature tRNA molecules by cleaving their 5'-ends. In Methanocaldococcus jannaschii (strain ATCC 43067 / DSM 2661 / JAL-1 / JCM 10045 / NBRC 100440) (Methanococcus jannaschii), this protein is Ribonuclease P protein component 1.